Here is a 405-residue protein sequence, read N- to C-terminus: Probable tRNA sulfurtransferase (405 aa).

Residues 60–165 (VPVAESLKQI…EEAAYLSYEN (106 aa)) form the THUMP domain. ATP is bound by residues 183-184 (ML), 208-209 (HF), arginine 265, glycine 287, and glutamine 296.

The protein belongs to the ThiI family.

The protein localises to the cytoplasm. It carries out the reaction [ThiI sulfur-carrier protein]-S-sulfanyl-L-cysteine + a uridine in tRNA + 2 reduced [2Fe-2S]-[ferredoxin] + ATP + H(+) = [ThiI sulfur-carrier protein]-L-cysteine + a 4-thiouridine in tRNA + 2 oxidized [2Fe-2S]-[ferredoxin] + AMP + diphosphate. It catalyses the reaction [ThiS sulfur-carrier protein]-C-terminal Gly-Gly-AMP + S-sulfanyl-L-cysteinyl-[cysteine desulfurase] + AH2 = [ThiS sulfur-carrier protein]-C-terminal-Gly-aminoethanethioate + L-cysteinyl-[cysteine desulfurase] + A + AMP + 2 H(+). Its pathway is cofactor biosynthesis; thiamine diphosphate biosynthesis. Its function is as follows. Catalyzes the ATP-dependent transfer of a sulfur to tRNA to produce 4-thiouridine in position 8 of tRNAs, which functions as a near-UV photosensor. Also catalyzes the transfer of sulfur to the sulfur carrier protein ThiS, forming ThiS-thiocarboxylate. This is a step in the synthesis of thiazole, in the thiamine biosynthesis pathway. The sulfur is donated as persulfide by IscS. In Streptococcus mutans serotype c (strain ATCC 700610 / UA159), this protein is Probable tRNA sulfurtransferase.